The chain runs to 232 residues: Ribonuclease 3 (232 aa).

Residues 5-134 (QTVLKNHFAI…FLGALLLDKD (130 aa)) form the RNase III domain. Residue glutamate 47 participates in Mg(2+) binding. Aspartate 51 is an active-site residue. Residues aspartate 120 and glutamate 123 each coordinate Mg(2+). Residue glutamate 123 is part of the active site. The DRBM domain occupies 160 to 229 (DYKTHLQELL…AKNAVEKGLD (70 aa)).

Belongs to the ribonuclease III family. In terms of assembly, homodimer. Mg(2+) is required as a cofactor.

It localises to the cytoplasm. It carries out the reaction Endonucleolytic cleavage to 5'-phosphomonoester.. Its function is as follows. Digests double-stranded RNA. Involved in the processing of primary rRNA transcript to yield the immediate precursors to the large and small rRNAs (23S and 16S). Processes some mRNAs, and tRNAs when they are encoded in the rRNA operon. Processes pre-crRNA and tracrRNA of type II CRISPR loci if present in the organism. This is Ribonuclease 3 from Streptococcus pneumoniae (strain CGSP14).